Here is a 273-residue protein sequence, read N- to C-terminus: MKVKFAKKYGFCFGVKRAIRIAERNQHATTFGPLIHNSREIERLQKDFDVSLSRSLEEAQKFKSVIVRTHGITKDDLQVLKEHHTHIIDATCPFVTKPQQIVEKMSQEGYQIIIFGDNSHPEVKGVASYGDDVAIIANIDELKHLTLKKKVALVSQTTKQPEHFGKIAALLVSLVNECRIFNTICSATFENQFAVDELSREADIMVIVGGKNSSNTKQLFKIAKEYCTDSYLIEDENEIDNTWFVGKELCGITAGASTPDWIISRVQEKIEQI.

Cys12 is a [4Fe-4S] cluster binding site. (2E)-4-hydroxy-3-methylbut-2-enyl diphosphate is bound by residues His36 and His70. Residues His36 and His70 each contribute to the dimethylallyl diphosphate site. Residues His36 and His70 each coordinate isopentenyl diphosphate. Cys92 contacts [4Fe-4S] cluster. Position 120 (His120) interacts with (2E)-4-hydroxy-3-methylbut-2-enyl diphosphate. His120 provides a ligand contact to dimethylallyl diphosphate. His120 lines the isopentenyl diphosphate pocket. The active-site Proton donor is Glu122. Residue Thr157 participates in (2E)-4-hydroxy-3-methylbut-2-enyl diphosphate binding. Cys185 lines the [4Fe-4S] cluster pocket. Positions 213, 214, 215, and 257 each coordinate (2E)-4-hydroxy-3-methylbut-2-enyl diphosphate. Ser213, Ser214, Asn215, and Ser257 together coordinate dimethylallyl diphosphate. Residues Ser213, Ser214, Asn215, and Ser257 each coordinate isopentenyl diphosphate.

This sequence belongs to the IspH family. The cofactor is [4Fe-4S] cluster.

It catalyses the reaction isopentenyl diphosphate + 2 oxidized [2Fe-2S]-[ferredoxin] + H2O = (2E)-4-hydroxy-3-methylbut-2-enyl diphosphate + 2 reduced [2Fe-2S]-[ferredoxin] + 2 H(+). It carries out the reaction dimethylallyl diphosphate + 2 oxidized [2Fe-2S]-[ferredoxin] + H2O = (2E)-4-hydroxy-3-methylbut-2-enyl diphosphate + 2 reduced [2Fe-2S]-[ferredoxin] + 2 H(+). Its pathway is isoprenoid biosynthesis; dimethylallyl diphosphate biosynthesis; dimethylallyl diphosphate from (2E)-4-hydroxy-3-methylbutenyl diphosphate: step 1/1. It participates in isoprenoid biosynthesis; isopentenyl diphosphate biosynthesis via DXP pathway; isopentenyl diphosphate from 1-deoxy-D-xylulose 5-phosphate: step 6/6. Its function is as follows. Catalyzes the conversion of 1-hydroxy-2-methyl-2-(E)-butenyl 4-diphosphate (HMBPP) into a mixture of isopentenyl diphosphate (IPP) and dimethylallyl diphosphate (DMAPP). Acts in the terminal step of the DOXP/MEP pathway for isoprenoid precursor biosynthesis. The protein is 4-hydroxy-3-methylbut-2-enyl diphosphate reductase of Helicobacter hepaticus (strain ATCC 51449 / 3B1).